Reading from the N-terminus, the 448-residue chain is Rhodanese-like domain-containing protein 8, chloroplastic (448 aa).

The transit peptide at 1-23 directs the protein to the chloroplast; it reads MRVSPAATLSVSLTTPLPITLTK. The 104-residue stretch at 220-323 folds into the Rhodanese domain; the sequence is SGKSYILLDV…YLKEEGTAEW (104 aa). Cysteine 283 acts as the Cysteine persulfide intermediate in catalysis.

The protein localises to the plastid. Its subcellular location is the chloroplast. The polypeptide is Rhodanese-like domain-containing protein 8, chloroplastic (STR8) (Arabidopsis thaliana (Mouse-ear cress)).